A 169-amino-acid chain; its full sequence is Disulfide bond formation protein B (169 aa).

Residues Met1–Ser13 are Cytoplasmic-facing. Residues Trp14–Tyr30 traverse the membrane as a helical segment. Residues Phe31–Val48 are Periplasmic-facing. Residues Cys40 and Cys43 are joined by a disulfide bond. The helical transmembrane segment at Ala49–Pro64 threads the bilayer. Over Ala65–Ala71 the chain is Cytoplasmic. Residues Leu72–Leu89 traverse the membrane as a helical segment. Topologically, residues Glu90–Glu144 are periplasmic. Cys104 and Cys130 form a disulfide bridge. Residues Trp145–Pro163 form a helical membrane-spanning segment. The Cytoplasmic portion of the chain corresponds to Met164–Ala169.

This sequence belongs to the DsbB family.

It is found in the cell inner membrane. In terms of biological role, required for disulfide bond formation in some periplasmic proteins. Acts by oxidizing the DsbA protein. The sequence is that of Disulfide bond formation protein B from Shewanella amazonensis (strain ATCC BAA-1098 / SB2B).